Consider the following 197-residue polypeptide: Thymidylate kinase (197 aa).

Position 7-14 (7-14 (GIDGSGKS)) interacts with ATP.

The protein belongs to the thymidylate kinase family.

It carries out the reaction dTMP + ATP = dTDP + ADP. Its function is as follows. Phosphorylation of dTMP to form dTDP in both de novo and salvage pathways of dTTP synthesis. The sequence is that of Thymidylate kinase from Thermotoga petrophila (strain ATCC BAA-488 / DSM 13995 / JCM 10881 / RKU-1).